The primary structure comprises 262 residues: Beta-phosphoglucomutase (262 aa).

Residue Asp-29 is the Nucleophile of the active site. The Mg(2+) site is built by Asp-29 and Asp-31. Residue Asp-29 is modified to 4-aspartylphosphate. Asp-31 functions as the Proton donor/acceptor in the catalytic mechanism. Beta-D-glucose 6-phosphate-binding residues include Asp-31, Gly-79, Arg-82, Ser-157, and Asn-159. Residue Asp-215 participates in Mg(2+) binding.

Belongs to the HAD-like hydrolase superfamily. CbbY/CbbZ/Gph/YieH family. Monomer. Requires Mg(2+) as cofactor. Post-translationally, autophosphorylated.

It carries out the reaction beta-D-glucose 1-phosphate = beta-D-glucose 6-phosphate. Catalyzes the interconversion of D-glucose 1-phosphate (G1P) and D-glucose 6-phosphate (G6P), forming beta-D-glucose 1,6-(bis)phosphate (beta-G16P) as an intermediate. This is Beta-phosphoglucomutase from Mycobacterium bovis (strain ATCC BAA-935 / AF2122/97).